A 449-amino-acid chain; its full sequence is Heterogeneous nuclear ribonucleoprotein H2 (449 aa).

M1 carries the post-translational modification N-acetylmethionine. M2 is subject to N-acetylmethionine; in Heterogeneous nuclear ribonucleoprotein H2, N-terminally processed. The region spanning 11-90 (FVVKVRGLPW…RYVEVFKSNS (80 aa)) is the RRM 1 domain. Residue S23 is modified to Phosphoserine. K35 participates in a covalent cross-link: Glycyl lysine isopeptide (Lys-Gly) (interchain with G-Cter in SUMO2). S54 and S63 each carry phosphoserine. K87 participates in a covalent cross-link: Glycyl lysine isopeptide (Lys-Gly) (interchain with G-Cter in SUMO2). Phosphoserine is present on S90. K98 participates in a covalent cross-link: Glycyl lysine isopeptide (Lys-Gly) (interchain with G-Cter in SUMO2). Residues 111-188 (GFVRLRGLPF…RYIEIFKSSR (78 aa)) enclose the RRM 2 domain. R233 carries the dimethylated arginine; alternate modification. R233 carries the omega-N-methylarginine; alternate modification. The stretch at 234–249 (GAYGGGYGGYDDYGGY) is one 1-1 repeat. A 2 X 16 AA Gly-rich approximate repeats region spans residues 234-433 (GAYGGGYGGY…YGGQSSMSGY (200 aa)). A Phosphotyrosine modification is found at Y246. Residues 289–364 (HCVHMRGLPY…RYVELFLNST (76 aa)) enclose the RRM 3 domain. Position 310 is a phosphoserine (S310). 3 consecutive repeat copies span residues 354 to 372 (HRYV…GGAY), 374 to 392 (HSYV…GGAY), and 418 to 433 (GGYG…MSGY). Positions 354-392 (HRYVELFLNSTAGTSGGAYDHSYVELFLNSTAGASGGAY) are 2 X 19 AA perfect repeats.

Component of a ribonucleoprotein complex containing mRNAs and RNA-binding proteins including DDX5, HNRNPH2 and SRSF1 as well as splicing regulator ARVCF. Interacts with TXNL4/DIM1. Expressed ubiquitously.

The protein localises to the nucleus. It localises to the nucleoplasm. This protein is a component of the heterogeneous nuclear ribonucleoprotein (hnRNP) complexes which provide the substrate for the processing events that pre-mRNAs undergo before becoming functional, translatable mRNAs in the cytoplasm. Binds poly(RG). This is Heterogeneous nuclear ribonucleoprotein H2 (HNRNPH2) from Homo sapiens (Human).